A 310-amino-acid polypeptide reads, in one-letter code: Acetaldehyde dehydrogenase 1 (310 aa).

Residue 12-15 (SGNI) coordinates NAD(+). C127 (acyl-thioester intermediate) is an active-site residue. Residues 163 to 171 (SAGPGTRAN) and N282 contribute to the NAD(+) site.

The protein belongs to the acetaldehyde dehydrogenase family.

The catalysed reaction is acetaldehyde + NAD(+) + CoA = acetyl-CoA + NADH + H(+). The chain is Acetaldehyde dehydrogenase 1 from Mycobacterium sp. (strain KMS).